The chain runs to 167 residues: uncharacterized protein (167 aa).

The signal sequence occupies residues 1 to 25 (MPFSVTKFSLIFVALLLAEALVAQS).

This is an uncharacterized protein from Caenorhabditis elegans.